A 363-amino-acid polypeptide reads, in one-letter code: Peptide chain release factor 1 (363 aa).

Residue glutamine 237 is modified to N5-methylglutamine. The span at 284 to 296 shows a compositional bias: basic and acidic residues; the sequence is EDEKRRSAEESTR. The disordered stretch occupies residues 284–306; sequence EDEKRRSAEESTRRSLVASGDRS.

Belongs to the prokaryotic/mitochondrial release factor family. In terms of processing, methylated by PrmC. Methylation increases the termination efficiency of RF1.

The protein resides in the cytoplasm. In terms of biological role, peptide chain release factor 1 directs the termination of translation in response to the peptide chain termination codons UAG and UAA. This chain is Peptide chain release factor 1, found in Shewanella putrefaciens (strain CN-32 / ATCC BAA-453).